Here is a 717-residue protein sequence, read N- to C-terminus: Polyribonucleotide nucleotidyltransferase (717 aa).

Mg(2+)-binding residues include Asp-495 and Asp-501. A KH domain is found at 562–624; that stretch reads PRMIMIQIPK…TALDSALSQI (63 aa). The S1 motif domain maps to 634–703; the sequence is GEVYEGKVKS…KTGKYRLSRK (70 aa).

Belongs to the polyribonucleotide nucleotidyltransferase family. Requires Mg(2+) as cofactor.

The protein resides in the cytoplasm. The catalysed reaction is RNA(n+1) + phosphate = RNA(n) + a ribonucleoside 5'-diphosphate. Involved in mRNA degradation. Catalyzes the phosphorolysis of single-stranded polyribonucleotides processively in the 3'- to 5'-direction. The polypeptide is Polyribonucleotide nucleotidyltransferase (Cytophaga hutchinsonii (strain ATCC 33406 / DSM 1761 / CIP 103989 / NBRC 15051 / NCIMB 9469 / D465)).